The chain runs to 400 residues: Large envelope protein (400 aa).

At methionine 1 the chain carries N-acetylmethionine. Glycine 2 is lipidated: N-myristoyl glycine; by host. Positions 2 to 119 (GAPLSTTRRG…PPLRDTHPQA (118 aa)) are pre-S1. The tract at residues 2–174 (GAPLSTTRRG…SSKTGGPAMN (173 aa)) is pre-S. Over 2 to 181 (GAPLSTTRRG…AMNMENITSG (180 aa)) the chain is Virion surface; in external conformation. Topologically, residues 2 to 253 (GAPLSTTRRG…PGYRWMCLRR (252 aa)) are intravirion; in internal conformation. N-linked (GlcNAc...) asparagine glycosylation occurs at proline 4. The tract at residues 84 to 110 (VLTTLPADPPPASTNRLSGRKPTQVSP) is disordered. Residues 96 to 109 (STNRLSGRKPTQVS) show a composition bias toward polar residues. Residues 120–174 (MQWNSTHFHQALLDPRVRALYFPAGGSSSGTQNPAPTIASLTSSISSKTGGPAMN) are pre-S2. The helical transmembrane segment at 182 to 202 (LLGPLRVLQAVCFLLTKILTI) threads the bilayer. At 203–253 (PQSLDSWWTSLNFLGGLPRCPGQNSQSPTSNHLPTSCPPTCPGYRWMCLRR) the chain is on the intravirion; in external conformation side. Residues 254 to 274 (FIIFLFILLLCLIFLLVLLDY) traverse the membrane as a helical segment. At 275-348 (QGMLPVCPLL…WASARFSWLS (74 aa)) the chain is on the virion surface side. Asparagine 320 carries N-linked (GlcNAc...) asparagine; by host glycosylation. Residues 349-369 (LLVQFVQWCVGLSPTVWLLVI) form a helical membrane-spanning segment. Residues 370–375 (WMIWYW) are Intravirion-facing. The chain crosses the membrane as a helical span at residues 376-398 (GPNLCSILSPFIPLLPIFCYLWV). Residues 399 to 400 (SI) lie on the Virion surface side of the membrane.

This sequence belongs to the orthohepadnavirus major surface antigen family. As to quaternary structure, in its internal form (Li-HBsAg), interacts with the capsid protein and with the isoform S. Interacts with host chaperone CANX. Associates with host chaperone CANX through its pre-S2 N glycan; this association may be essential for isoform M proper secretion. In terms of assembly, interacts with isoform L. Interacts with the antigens of satellite virus HDV (HDVAgs); this interaction is required for encapsidation of HDV genomic RNA. In terms of processing, isoform M is N-terminally acetylated by host at a ratio of 90%, and N-glycosylated by host at the pre-S2 region. Myristoylated.

The protein localises to the virion membrane. Functionally, the large envelope protein exists in two topological conformations, one which is termed 'external' or Le-HBsAg and the other 'internal' or Li-HBsAg. In its external conformation the protein attaches the virus to cell receptors and thereby initiating infection. This interaction determines the species specificity and liver tropism. This attachment induces virion internalization predominantly through caveolin-mediated endocytosis. The large envelope protein also assures fusion between virion membrane and endosomal membrane. In its internal conformation the protein plays a role in virion morphogenesis and mediates the contact with the nucleocapsid like a matrix protein. Its function is as follows. The middle envelope protein plays an important role in the budding of the virion. It is involved in the induction of budding in a nucleocapsid independent way. In this process the majority of envelope proteins bud to form subviral lipoprotein particles of 22 nm of diameter that do not contain a nucleocapsid. In Homo sapiens (Human), this protein is Large envelope protein.